A 631-amino-acid chain; its full sequence is tRNA uridine 5-carboxymethylaminomethyl modification enzyme MnmG (631 aa).

An FAD-binding site is contributed by 15–20 (GAGHAG). Positions 214 to 233 (YSKTEEEPGDKEPRHFSFTS) are disordered. 276-290 (GPRYCPSIETKVVRF) provides a ligand contact to NAD(+).

The protein belongs to the MnmG family. As to quaternary structure, homodimer. Heterotetramer of two MnmE and two MnmG subunits. FAD serves as cofactor.

The protein resides in the cytoplasm. In terms of biological role, NAD-binding protein involved in the addition of a carboxymethylaminomethyl (cmnm) group at the wobble position (U34) of certain tRNAs, forming tRNA-cmnm(5)s(2)U34. The sequence is that of tRNA uridine 5-carboxymethylaminomethyl modification enzyme MnmG from Lactobacillus delbrueckii subsp. bulgaricus (strain ATCC BAA-365 / Lb-18).